Reading from the N-terminus, the 369-residue chain is MDFTSDTTNSHDTSNSHLSLEDAVGTHHAGEADVNIDGDEKQQLSLLDDDQVRALKLQEEKDALLTRRNTLLQEIQTYQNILMKENNSKTKNGDILQNDITQDFLNLISISSSNPNSAISDRKRVERINGLTNLQKELVTKYDTLPLLNMNLRLSYLRDHTYPHLQVSVQSRDRVHNDGIEVLVVNYKFCRNTMNPFEIQFKMFYKFEDSTLLKWEILRISTNVRLKAKQLLATRNFQKCLLSLYEFDKIKSKKTGIFQNLINLLKRKTRCYLMNNSDSLIVERVIREGRLTTIKLQINFIITMPGERGKPRNCFLPMSKISIALWKGGERFNQIDLDEICYGLIKEYGVKTGLKEICNVCLFPDMYAR.

The stretch at 51 to 87 forms a coiled coil; that stretch reads QVRALKLQEEKDALLTRRNTLLQEIQTYQNILMKENN.

The protein belongs to the CENP-P/CTF19 family. Component of the heterotetrameric kinetochore subcomplex COMA, which consists of AME1, CTF19, MCM21 and OKP1. The COMA subcomplex is part of a larger constitutive centromere-associated network (CCAN) (also known as central kinetochore CTF19 complex in yeast), which is composed of at least AME1, CHL4, CNN1, CTF3, CTF19, IML3, MCM16, MCM21, MCM22, MHF1, MHF2, MIF2, NKP1, NKP2, OKP1 and WIP1. COMA binds the centromeric nucleosome-binding protein MIF2, and to the outer kinetochore MIND subcomplex. CTF19 interacts with the CTF3 complex subunits CTF3, MCM16 and MCM22 as well as CHL4 and IML3. Interacts with the N-terminal domain of centromeric nucleosome protein CSE4 and with the CBF3 complex subunit A (CBF2).

It localises to the nucleus. The protein localises to the chromosome. Its subcellular location is the centromere. The protein resides in the kinetochore. Component of the kinetochore, a multiprotein complex that assembles on centromeric DNA and attaches chromosomes to spindle microtubules, mediating chromosome segregation and sister chromatid segregation during meiosis and mitosis. Component of the inner kinetochore COMA complex, which connects centromere-associated proteins and the outer kinetochore. COMA interacts with other inner kinetochore proteins to form the inner kinetochore constitutive centromere-associated network (CCAN), which serves as a structural platform for outer kinetochore assembly. The polypeptide is Inner kinetochore subunit CTF19 (CTF19) (Saccharomyces cerevisiae (strain ATCC 204508 / S288c) (Baker's yeast)).